The following is a 513-amino-acid chain: Protein phosphatase 1H (513 aa).

Ser-7 bears the Phosphoserine mark. The region spanning 77-506 is the PPM-type phosphatase domain; that stretch reads ATGYAEVINA…DDISVYVIPL (430 aa). A disordered region spans residues 109 to 133; the sequence is TITSTPNRNSKRRSSLPNGEGLQLK. At Thr-113 the chain carries Phosphothreonine. A phosphoserine mark is found at Ser-123 and Ser-210. Arg-212 carries the post-translational modification Omega-N-methylarginine. Ser-220 carries the phosphoserine modification. Phosphothreonine is present on Thr-223. Ser-421 is modified (phosphoserine).

Belongs to the PP2C family.

It localises to the nucleus. It is found in the cytoplasm. It catalyses the reaction O-phospho-L-seryl-[protein] + H2O = L-seryl-[protein] + phosphate. The catalysed reaction is O-phospho-L-threonyl-[protein] + H2O = L-threonyl-[protein] + phosphate. Functionally, dephosphorylates CDKN1B at 'Thr-187', thus removing a signal for proteasomal degradation. The chain is Protein phosphatase 1H (Ppm1h) from Mus musculus (Mouse).